Here is a 202-residue protein sequence, read N- to C-terminus: Putative 3-methyladenine DNA glycosylase (202 aa).

Belongs to the DNA glycosylase MPG family.

This Alkaliphilus oremlandii (strain OhILAs) (Clostridium oremlandii (strain OhILAs)) protein is Putative 3-methyladenine DNA glycosylase.